We begin with the raw amino-acid sequence, 301 residues long: Glutamyl-Q tRNA(Asp) synthetase (301 aa).

L-glutamate is bound by residues 9–13 (RFAPS) and Glu-45. Positions 12 to 22 (PSPTGPLHLGS) match the 'HIGH' region motif. Zn(2+) is bound by residues Cys-101, Cys-103, Tyr-121, and Cys-125. L-glutamate is bound by residues Tyr-179 and Arg-197. Residues 235 to 239 (KLSKQ) carry the 'KMSKS' region motif. Lys-238 is an ATP binding site.

It belongs to the class-I aminoacyl-tRNA synthetase family. GluQ subfamily. Requires Zn(2+) as cofactor.

Functionally, catalyzes the tRNA-independent activation of glutamate in presence of ATP and the subsequent transfer of glutamate onto a tRNA(Asp). Glutamate is transferred on the 2-amino-5-(4,5-dihydroxy-2-cyclopenten-1-yl) moiety of the queuosine in the wobble position of the QUC anticodon. The chain is Glutamyl-Q tRNA(Asp) synthetase from Thiobacillus denitrificans (strain ATCC 25259 / T1).